The sequence spans 432 residues: MLMKKVPHIIHRANQSGGKRYERMVAFVAFFRTNLLHDRIFISAGSLAFQTLLSIVPVLAVVLSVLNLFEVFTPFQHSLETFLVENFMPATGRLLHGYLLEFVGKTGNIPLLGSLLLFVIALSLLSTVDQTLNDIWGIRAPRKALQGFTLYWTVLTLGPLLIVSSLAASSYVWYTIFTDEGALFELKTRLLALFPFINSIVAFFLLYMLVPKRRVRIAHAFAGALVASLLLELSKRWFLFYVTHVATFEHIYGALSVVPMLFFWVYLAWVVVLVGAEFVYCLGAFAPSTPTAEAQGSLRYLSLPLAVLATLHNAIEKGAPLSLKSLSRELSTLPFNLLRDMVDLLLDRQVLHLSTRGELALSRNLHAMSLYELYQIIPQPINATEKSLLFSESKSVHLAPLSLEVEACLQERMATPIAELLQHSFLKASTVD.

A run of 6 helical transmembrane segments spans residues 52 to 72 (LLSI…FEVF), 108 to 128 (NIPL…LSTV), 148 to 168 (FTLY…SLAA), 190 to 210 (LLAL…YMLV), 220 to 240 (AFAG…WFLF), and 254 to 274 (ALSV…VVLV).

The protein belongs to the UPF0761 family.

Its subcellular location is the cell inner membrane. This is UPF0761 membrane protein Cag_0935 from Chlorobium chlorochromatii (strain CaD3).